Reading from the N-terminus, the 376-residue chain is Thymidine kinase (376 aa).

Residues 1–39 (MASYPCHQHASAFDQAARSRGHSNRRTALRPRRQQEATE) form a disordered region. The segment covering 19-32 (SRGHSNRRTALRPR) has biased composition (basic residues). 56-63 (GPHGMGKT) lines the ATP pocket. Glu83 serves as the catalytic Proton acceptor. 2 residues coordinate substrate: Tyr101 and Gln125. Arg216 is an ATP binding site. Position 222 (Arg222) interacts with substrate. The tract at residues 260-280 (GQLSGTAVPPQGAEPQSNAGP) is disordered.

The protein belongs to the herpesviridae thymidine kinase family. Homodimer.

It catalyses the reaction thymidine + ATP = dTMP + ADP + H(+). Functionally, catalyzes the transfer of the gamma-phospho group of ATP to thymidine to generate dTMP in the salvage pathway of pyrimidine synthesis. The dTMP serves as a substrate for DNA polymerase during viral DNA replication. Allows the virus to be reactivated and to grow in non-proliferative cells lacking a high concentration of phosphorylated nucleic acid precursors. In Homo sapiens (Human), this protein is Thymidine kinase.